Reading from the N-terminus, the 224-residue chain is tRNA (guanine-N(7)-)-methyltransferase (224 aa).

Residues Glu-54, Glu-79, Glu-106, and Asp-129 each contribute to the S-adenosyl-L-methionine site. Asp-129 is a catalytic residue. Substrate is bound by residues Lys-133 and Asp-165.

It belongs to the class I-like SAM-binding methyltransferase superfamily. TrmB family.

The enzyme catalyses guanosine(46) in tRNA + S-adenosyl-L-methionine = N(7)-methylguanosine(46) in tRNA + S-adenosyl-L-homocysteine. Its pathway is tRNA modification; N(7)-methylguanine-tRNA biosynthesis. Catalyzes the formation of N(7)-methylguanine at position 46 (m7G46) in tRNA. This is tRNA (guanine-N(7)-)-methyltransferase from Chlamydia trachomatis serovar D (strain ATCC VR-885 / DSM 19411 / UW-3/Cx).